The chain runs to 626 residues: DNA-directed RNA polymerase subunit gamma (626 aa).

Zn(2+) is bound by residues C71, C73, C86, and C89. Mg(2+) is bound by residues D467, D469, and D471.

This sequence belongs to the RNA polymerase beta' chain family. RpoC1 subfamily. In terms of assembly, in cyanobacteria the RNAP catalytic core is composed of 2 alpha, 1 beta, 1 beta', 1 gamma and 1 omega subunit. When a sigma factor is associated with the core the holoenzyme is formed, which can initiate transcription. Mg(2+) is required as a cofactor. The cofactor is Zn(2+).

The enzyme catalyses RNA(n) + a ribonucleoside 5'-triphosphate = RNA(n+1) + diphosphate. DNA-dependent RNA polymerase catalyzes the transcription of DNA into RNA using the four ribonucleoside triphosphates as substrates. In Synechocystis sp. (strain ATCC 27184 / PCC 6803 / Kazusa), this protein is DNA-directed RNA polymerase subunit gamma.